Reading from the N-terminus, the 244-residue chain is DNA repair protein RecO (244 aa).

This sequence belongs to the RecO family.

Functionally, involved in DNA repair and RecF pathway recombination. This Ehrlichia chaffeensis (strain ATCC CRL-10679 / Arkansas) protein is DNA repair protein RecO.